Consider the following 178-residue polypeptide: Ribosome maturation factor RimP (178 aa).

Belongs to the RimP family.

It localises to the cytoplasm. Functionally, required for maturation of 30S ribosomal subunits. The chain is Ribosome maturation factor RimP from Maricaulis maris (strain MCS10) (Caulobacter maris).